The chain runs to 254 residues: Alcohol dehydrogenase (254 aa).

An NAD(+)-binding site is contributed by 10–33; it reads FVAGLGGIGLDTSREIVKSGPKNL. Ser-138 is a binding site for substrate. Tyr-151 (proton acceptor) is an active-site residue.

This sequence belongs to the short-chain dehydrogenases/reductases (SDR) family. Homodimer.

It catalyses the reaction a primary alcohol + NAD(+) = an aldehyde + NADH + H(+). It carries out the reaction a secondary alcohol + NAD(+) = a ketone + NADH + H(+). This is Alcohol dehydrogenase (Adh) from Drosophila grimshawi (Hawaiian fruit fly).